Here is a 140-residue protein sequence, read N- to C-terminus: Smith-Magenis syndrome chromosomal region candidate gene 5 protein (140 aa).

Positions 43 to 77 (CTGPSSQAPPQPPQASPPAAADHSRTPSLLASSHS) are disordered. The span at 49–58 (QAPPQPPQAS) shows a compositional bias: pro residues.

In terms of tissue distribution, widely expressed.

The chain is Smith-Magenis syndrome chromosomal region candidate gene 5 protein (SMCR5) from Homo sapiens (Human).